A 474-amino-acid polypeptide reads, in one-letter code: tRNA-2-methylthio-N(6)-dimethylallyladenosine synthase (474 aa).

The region spanning 3 to 120 (KKLHIKTWGC…LPEMINHVQG (118 aa)) is the MTTase N-terminal domain. 6 residues coordinate [4Fe-4S] cluster: Cys-12, Cys-49, Cys-83, Cys-157, Cys-161, and Cys-164. In terms of domain architecture, Radical SAM core spans 143 to 375 (RADGPTAFVS…QDRITKQAMR (233 aa)). A TRAM domain is found at 378–441 (RLMLGTVQRI…TNSLRGIVVR (64 aa)).

Belongs to the methylthiotransferase family. MiaB subfamily. In terms of assembly, monomer. It depends on [4Fe-4S] cluster as a cofactor.

It localises to the cytoplasm. It carries out the reaction N(6)-dimethylallyladenosine(37) in tRNA + (sulfur carrier)-SH + AH2 + 2 S-adenosyl-L-methionine = 2-methylsulfanyl-N(6)-dimethylallyladenosine(37) in tRNA + (sulfur carrier)-H + 5'-deoxyadenosine + L-methionine + A + S-adenosyl-L-homocysteine + 2 H(+). Functionally, catalyzes the methylthiolation of N6-(dimethylallyl)adenosine (i(6)A), leading to the formation of 2-methylthio-N6-(dimethylallyl)adenosine (ms(2)i(6)A) at position 37 in tRNAs that read codons beginning with uridine. The chain is tRNA-2-methylthio-N(6)-dimethylallyladenosine synthase from Pectobacterium atrosepticum (strain SCRI 1043 / ATCC BAA-672) (Erwinia carotovora subsp. atroseptica).